Consider the following 192-residue polypeptide: GTP cyclohydrolase 1 (192 aa).

Zn(2+) contacts are provided by Cys82, His85, and Cys153.

The protein belongs to the GTP cyclohydrolase I family. As to quaternary structure, toroid-shaped homodecamer, composed of two pentamers of five dimers.

The catalysed reaction is GTP + H2O = 7,8-dihydroneopterin 3'-triphosphate + formate + H(+). Its pathway is cofactor biosynthesis; 7,8-dihydroneopterin triphosphate biosynthesis; 7,8-dihydroneopterin triphosphate from GTP: step 1/1. This Rickettsia bellii (strain OSU 85-389) protein is GTP cyclohydrolase 1.